We begin with the raw amino-acid sequence, 89 residues long: Small ribosomal subunit protein bS18 (89 aa).

It belongs to the bacterial ribosomal protein bS18 family. Part of the 30S ribosomal subunit. Forms a tight heterodimer with protein bS6.

Functionally, binds as a heterodimer with protein bS6 to the central domain of the 16S rRNA, where it helps stabilize the platform of the 30S subunit. This chain is Small ribosomal subunit protein bS18, found in Bdellovibrio bacteriovorus (strain ATCC 15356 / DSM 50701 / NCIMB 9529 / HD100).